We begin with the raw amino-acid sequence, 355 residues long: uncharacterized protein (355 aa).

The protein belongs to the ycf89 family.

It is found in the plastid. The protein resides in the chloroplast. This is an uncharacterized protein from Trieres chinensis (Marine centric diatom).